The primary structure comprises 130 residues: Small ribosomal subunit protein uS9 (130 aa).

The protein belongs to the universal ribosomal protein uS9 family.

This is Small ribosomal subunit protein uS9 from Vibrio cholerae serotype O1 (strain ATCC 39541 / Classical Ogawa 395 / O395).